We begin with the raw amino-acid sequence, 290 residues long: Glycine--tRNA ligase alpha subunit (290 aa).

Belongs to the class-II aminoacyl-tRNA synthetase family. In terms of assembly, tetramer of two alpha and two beta subunits.

Its subcellular location is the cytoplasm. The enzyme catalyses tRNA(Gly) + glycine + ATP = glycyl-tRNA(Gly) + AMP + diphosphate. The sequence is that of Glycine--tRNA ligase alpha subunit from Nitratiruptor sp. (strain SB155-2).